The following is a 274-amino-acid chain: MPRSPGLFLLLLVLQPLPALGLGLRSAGGRNPECGPCRPERCPEPVRCPVPGIVARDECGCCALCLGAEGASCGGRAGARCGPGLVCASRAAGAAPEGTGLCVCAQRGSVCGSDGRSYPSVCALRLRARQAPRALPGHLHKARDGPCEFAPVVITPPQSVHNVTGAQVYLSCEVRAVPTPVVTWRKVTRSPEGTQVMEELPGDHTNIAVQVQGGPSDHEATAWVLINPLRKEDEGVYQCHSANAVGEAQSHGTVTVVDRSQYRAPRFPAPDDRL.

The first 21 residues, 1–21, serve as a signal peptide directing secretion; the sequence is MPRSPGLFLLLLVLQPLPALG. The 76-residue stretch at 30-105 folds into the IGFBP N-terminal domain; it reads RNPECGPCRP…PEGTGLCVCA (76 aa). 7 disulfides stabilise this stretch: Cys-34–Cys-59, Cys-37–Cys-61, Cys-42–Cys-62, Cys-48–Cys-65, Cys-73–Cys-87, Cys-81–Cys-102, and Cys-111–Cys-147. A Kazal-like domain is found at 91–149; it reads AAGAAPEGTGLCVCAQRGSVCGSDGRSYPSVCALRLRARQAPRALPGHLHKARDGPCEF. The Ig-like C2-type domain maps to 151 to 255; it reads PVVITPPQSV…GEAQSHGTVT (105 aa). Asn-162 is a glycosylation site (N-linked (GlcNAc...) asparagine). An intrachain disulfide couples Cys-172 to Cys-239.

It is found in the secreted. Its function is as follows. IGF-binding proteins prolong the half-life of IGFs and have been shown to either inhibit or stimulate the growth promoting effects of the IGFs in cell culture. They alter the interaction of IGFs with their cell surface receptors. The chain is Insulin-like growth factor-binding protein-like 1 (IGFBPL1) from Bos taurus (Bovine).